A 490-amino-acid chain; its full sequence is tRNA-guanine(15) transglycosylase (490 aa).

Asp90 functions as the Nucleophile in the catalytic mechanism. Substrate is bound by residues Asp125 and Ala193. The Zn(2+) site is built by Cys276, Cys278, and Cys281.

This sequence belongs to the archaeosine tRNA-ribosyltransferase family. It depends on Zn(2+) as a cofactor.

It catalyses the reaction guanosine(15) in tRNA + 7-cyano-7-deazaguanine = 7-cyano-7-carbaguanosine(15) in tRNA + guanine. Its pathway is tRNA modification; archaeosine-tRNA biosynthesis. In terms of biological role, exchanges the guanine residue with 7-cyano-7-deazaguanine (preQ0) at position 15 in the dihydrouridine loop (D-loop) of archaeal tRNAs. The sequence is that of tRNA-guanine(15) transglycosylase from Methanosarcina mazei (strain ATCC BAA-159 / DSM 3647 / Goe1 / Go1 / JCM 11833 / OCM 88) (Methanosarcina frisia).